A 297-amino-acid polypeptide reads, in one-letter code: Protoheme IX farnesyltransferase 1 (297 aa).

9 helical membrane passes run 23-43 (VVVLMLITSLAGMFLATRAGV), 45-65 (WSVLLFGNLGIGLCAGGAAVV), 93-113 (LPALLFALALALLGMVLLLVF), 117-137 (LTAWLTLASLLGYAVLYTGFL), 145-165 (IVIGGLAGAAPPLLGWVAVSG), 171-191 (PLLLVLIIFAWTPPHFWALAI), 216-236 (LHILLYTLILLAVSLLPYAIH), 241-261 (LYLACALGLGLRFLHWAWVLY), and 277-297 (IGYLFALFIALLLDHYLLLSL).

It belongs to the UbiA prenyltransferase family. Protoheme IX farnesyltransferase subfamily.

It localises to the cell inner membrane. It carries out the reaction heme b + (2E,6E)-farnesyl diphosphate + H2O = Fe(II)-heme o + diphosphate. It functions in the pathway porphyrin-containing compound metabolism; heme O biosynthesis; heme O from protoheme: step 1/1. Converts heme B (protoheme IX) to heme O by substitution of the vinyl group on carbon 2 of heme B porphyrin ring with a hydroxyethyl farnesyl side group. This chain is Protoheme IX farnesyltransferase 1, found in Pseudomonas putida (strain ATCC 700007 / DSM 6899 / JCM 31910 / BCRC 17059 / LMG 24140 / F1).